The chain runs to 572 residues: BOS complex subunit ncln (572 aa).

The N-terminal stretch at 1–35 is a signal peptide; sequence MFEEAGEVLENMLKVSFPLSLVLFLVLVCPLRAEA. Residues 36 to 530 are Extracellular-facing; sequence AHEFSVYRMQ…TMNAYRVKPA (495 aa). Asn108, Asn234, and Asn436 each carry an N-linked (GlcNAc...) asparagine glycan. Residues 531-551 traverse the membrane as a helical segment; sequence IFDLLLAVCIASYLGVLYLAI. Residues 552–572 are Cytoplasmic-facing; the sequence is QNFGLLYGFLRRVTAPRVKQH.

The protein belongs to the nicastrin family. In terms of assembly, component of the multi-pass translocon (MPT) complex.

The protein localises to the endoplasmic reticulum membrane. Component of the multi-pass translocon (MPT) complex that mediates insertion of multi-pass membrane proteins into the lipid bilayer of membranes. The MPT complex takes over after the SEC61 complex: following membrane insertion of the first few transmembrane segments of proteins by the SEC61 complex, the MPT complex occludes the lateral gate of the SEC61 complex to promote insertion of subsequent transmembrane regions. Antagonizes Nodal signaling and subsequent organization of axial structures during mesodermal patterning. Ectopic expression results in cyclopia, due to a defect in mesendoderm patterning. The chain is BOS complex subunit ncln (ncln) from Danio rerio (Zebrafish).